Reading from the N-terminus, the 281-residue chain is Shikimate dehydrogenase (NADP(+)) (281 aa).

Shikimate is bound by residues 20 to 22 (SRS) and threonine 67. Lysine 71 (proton acceptor) is an active-site residue. Aspartate 83 lines the NADP(+) pocket. Asparagine 92 and aspartate 108 together coordinate shikimate. Residues 133 to 137 (GAGGA), 157 to 162 (NRTEAR), and methionine 225 each bind NADP(+). Residue tyrosine 227 participates in shikimate binding. An NADP(+)-binding site is contributed by glycine 248.

It belongs to the shikimate dehydrogenase family. In terms of assembly, homodimer.

It carries out the reaction shikimate + NADP(+) = 3-dehydroshikimate + NADPH + H(+). The protein operates within metabolic intermediate biosynthesis; chorismate biosynthesis; chorismate from D-erythrose 4-phosphate and phosphoenolpyruvate: step 4/7. Functionally, involved in the biosynthesis of the chorismate, which leads to the biosynthesis of aromatic amino acids. Catalyzes the reversible NADPH linked reduction of 3-dehydroshikimate (DHSA) to yield shikimate (SA). The sequence is that of Shikimate dehydrogenase (NADP(+)) from Paracidovorax citrulli (strain AAC00-1) (Acidovorax citrulli).